Here is a 476-residue protein sequence, read N- to C-terminus: NADH-quinone oxidoreductase subunit N (476 aa).

A run of 14 helical transmembrane segments spans residues 4–24 (LLALSPLILVCATAIVVMLTI), 32–52 (LTATLTVVGLNLALAAQVVAW), 67–87 (GLAVFGGVLILIATLACATLG), 100–117 (EYYLLLLCAAAGGLALVS), 121–141 (LAALFFGLELLSMPLYGMLAY), 155–175 (YMVLSAAASAFLLFGMALLYS), 198–218 (LMAGMGMMLIGLGFKLSIVPF), 230–250 (PAPAATFLASASKVAVLLVLL), 263–283 (LHSLLAVLAFVTMLVGNLLAL), 291–311 (LLGYSSIAHFGYLLVALVVND), 319–339 (ALYLVTYVLTTLGAFGVVTLL), 366–386 (AVLTVMMLSLAGIPFTAGFIG), 406–426 (VVAGSAIGLYYYLRVMVTLFL), and 447–467 (VVVLGLAALVVVLGVYPAPMI).

This sequence belongs to the complex I subunit 2 family. In terms of assembly, NDH-1 is composed of 14 different subunits. Subunits NuoA, H, J, K, L, M, N constitute the membrane sector of the complex.

The protein localises to the cell inner membrane. The catalysed reaction is a quinone + NADH + 5 H(+)(in) = a quinol + NAD(+) + 4 H(+)(out). Its function is as follows. NDH-1 shuttles electrons from NADH, via FMN and iron-sulfur (Fe-S) centers, to quinones in the respiratory chain. The immediate electron acceptor for the enzyme in this species is believed to be ubiquinone. Couples the redox reaction to proton translocation (for every two electrons transferred, four hydrogen ions are translocated across the cytoplasmic membrane), and thus conserves the redox energy in a proton gradient. In Chromohalobacter salexigens (strain ATCC BAA-138 / DSM 3043 / CIP 106854 / NCIMB 13768 / 1H11), this protein is NADH-quinone oxidoreductase subunit N.